Here is a 451-residue protein sequence, read N- to C-terminus: Tubulin alpha-2 chain (451 aa).

Positions 12, 73, 142, 146, 147, 181, 208, and 230 each coordinate GTP. Residue Asp-73 participates in Mg(2+) binding. Residue Glu-256 is part of the active site.

It belongs to the tubulin family. Dimer of alpha and beta chains. A typical microtubule is a hollow water-filled tube with an outer diameter of 25 nm and an inner diameter of 15 nM. Alpha-beta heterodimers associate head-to-tail to form protofilaments running lengthwise along the microtubule wall with the beta-tubulin subunit facing the microtubule plus end conferring a structural polarity. Microtubules usually have 13 protofilaments but different protofilament numbers can be found in some organisms and specialized cells. Mg(2+) serves as cofactor.

It is found in the cytoplasm. It localises to the cytoskeleton. It carries out the reaction GTP + H2O = GDP + phosphate + H(+). Functionally, tubulin is the major constituent of microtubules, a cylinder consisting of laterally associated linear protofilaments composed of alpha- and beta-tubulin heterodimers. Microtubules grow by the addition of GTP-tubulin dimers to the microtubule end, where a stabilizing cap forms. Below the cap, tubulin dimers are in GDP-bound state, owing to GTPase activity of alpha-tubulin. This chain is Tubulin alpha-2 chain (tubB), found in Emericella nidulans (strain FGSC A4 / ATCC 38163 / CBS 112.46 / NRRL 194 / M139) (Aspergillus nidulans).